A 543-amino-acid chain; its full sequence is Transmembrane protease serine 13 (543 aa).

Disordered regions lie at residues 1 to 96 and 109 to 129; these read MDRG…TRVY and RASPARSAPATRATRESPGLS. Topologically, residues 1–143 are cytoplasmic; the sequence is MDRGSHRNSS…SWQETQRQLP (143 aa). 2 tandem repeats follow at residues 14–17 and 18–22. The 4 X 4 AA repeats of T-P-P-Q stretch occupies residues 14 to 49; sequence TPPQASPARTSPARAPPQASPARTPPQASPARTPPQ. Residues 18-69 are 8 X 5 AA repeats of A-S-P-A-R; that stretch reads ASPARTSPARAPPQASPARTPPQASPARTPPQASPARAPPPQASPARASPAR. The stretch at 23–27 is one 2-2; approximate repeat; it reads TSPAR. Over residues 27–60 the composition is skewed to pro residues; the sequence is RAPPQASPARTPPQASPARTPPQASPARAPPPQA. The stretch at 28-31 is one 1-2; approximate repeat; the sequence is APPQ. 5 tandem repeats follow at residues 32–36, 37–40, 41–45, 46–49, and 50–54. The stretch at 55–59 is one 2-6; approximate repeat; it reads APPPQ. 2 consecutive repeat copies span residues 60–64 and 65–69. Low complexity-rich tracts occupy residues 61-94 and 109-120; these read SPARASPARAPPSRSSSGRSSSARSASTTSSPTR and RASPARSAPATR. A helical; Signal-anchor for type II membrane protein membrane pass occupies residues 144–164; the sequence is LIGCVILLISLVISLILLFYF. Over 165–543 the chain is Extracellular; that stretch reads WRGHTGIKYK…MESEVRFRKS (379 aa). The LDL-receptor class A domain maps to 180 to 202; the sequence is CPIHAVRCDGVVDCKMKSDELGC. The region spanning 199-301 is the SRCR domain; sequence ELGCVRFDWD…HCGLRAMTGR (103 aa). Intrachain disulfides connect cysteine 226–cysteine 290, cysteine 239–cysteine 293, and cysteine 327–cysteine 343. Residues asparagine 231 and asparagine 268 are each glycosylated (N-linked (GlcNAc...) asparagine). The Peptidase S1 domain occupies 302–535; sequence IVGGALTSES…VLPWIYRKME (234 aa). Catalysis depends on histidine 342, which acts as the Charge relay system. Residue asparagine 381 is glycosylated (N-linked (GlcNAc...) asparagine). The active-site Charge relay system is aspartate 390. Asparagine 421 carries an N-linked (GlcNAc...) asparagine glycan. Cystine bridges form between cysteine 424–cysteine 493, cysteine 456–cysteine 472, and cysteine 483–cysteine 511. Serine 487 serves as the catalytic Charge relay system.

This sequence belongs to the peptidase S1 family. Interacts with SPINT1/HAI-1; the interaction promotes the phosphorylation and cell membrane localization of TMPRSS13. Interacts with SPINT2/HAI-2; the interaction promotes the phosphorylation and cell membrane localization of TMPRSS13. The inactive zymogen is post-translationally modified and then trafficked to the cell surface, whereby it undergoes autocatalytic cleavage resulting in an activated form that is released extracellularly. In terms of processing, phosphorylation is required for localization at the cell surface. Phosphorylation increases following inhibition of protease activity by SPINT2/HAI-2. In terms of tissue distribution, expressed in the suprabasal squamous epithelium of the epidermis, hair follicles, oral epithelium, cornea, upper digestive tract, transitional epithelium of the bladder, prostate, heart, intestine, kidney and thymus.

The protein resides in the cell membrane. It is found in the secreted. It localises to the cytoplasm. Cleavage of HGF is inhibited by SPINT1/HAI-1 via the BPTI/Kunitz inhibitor 1 domain. In terms of biological role, serine protease. Cleaves the proform of PRSS8/prostasin to form the active protein. Cleaves the proform of HGF to form the active protein which promotes MAPK signaling. Promotes the formation of the stratum corneum and subsequently the epidermal barrier in embryos. This is Transmembrane protease serine 13 (Tmprss13) from Mus musculus (Mouse).